Consider the following 621-residue polypeptide: MTAPFLSSLSPTSPLASATAPFPGSRKVYARPADAPHLRVPFREIILSDPGEAPVRVADPSGPYSDPEATIDLRQGLARHRASWASARGNSTVTAGRPAPSEGDFEAFPLTYAPLRRRDETPFTQLEYARAGVITDEMIYVATRENLGRDSAVAGACARLAGGEAFGAALPAHVTPEFVRAEIAAGRAIIPANINHPELEPTIIGRNFLVKVNANIGNSALGSSIEDEVAKLVWAIRWGADTVMDLSTGKAIHATREWILRNSPVPIGTVPLYQALEKVGGDATRLDWAVFEDTLIEQCEQGVDYFTIHAGVRLAHIPLTASRTTGIVSRGGSILAKWCLSHHRENFLYERFADICAILRRYDVAFSLGDGLRPGSVADANDAAQFAELDTLGALTAVAWEHGCQVMVEGPGHVPMHKIKANMDRQLATCGEAPFYTLGPLTTDIAPGHDHITSAIGAAMIGWFGTAMLCYVTPKEHLGLPDRADVKAGVIAYKLAAHAADIAKGHPAAQLRDDAISRARFDFRWSDQFNLGLDPEGARAFHDETLPHAAHKTAHFCSMCGPKFCSMKISHDIRDGALEGADALTQAGLDQMSATFRASGGEVHLDAQALDALAWEGKPAR.

The segment covering M1–P23 has biased composition (low complexity). The segment at M1–Y29 is disordered. Substrate is bound by residues N215, M244, Y273, H309, S329–G331, D370–R373, and E409. H413 is a Zn(2+) binding site. A substrate-binding site is contributed by Y436. H477 contacts Zn(2+). [4Fe-4S] cluster-binding residues include C557, C560, and C565.

Belongs to the ThiC family. In terms of assembly, homodimer. The cofactor is [4Fe-4S] cluster.

It carries out the reaction 5-amino-1-(5-phospho-beta-D-ribosyl)imidazole + S-adenosyl-L-methionine = 4-amino-2-methyl-5-(phosphooxymethyl)pyrimidine + CO + 5'-deoxyadenosine + formate + L-methionine + 3 H(+). The protein operates within cofactor biosynthesis; thiamine diphosphate biosynthesis. Functionally, catalyzes the synthesis of the hydroxymethylpyrimidine phosphate (HMP-P) moiety of thiamine from aminoimidazole ribotide (AIR) in a radical S-adenosyl-L-methionine (SAM)-dependent reaction. The protein is Phosphomethylpyrimidine synthase of Rhodospirillum rubrum (strain ATCC 11170 / ATH 1.1.1 / DSM 467 / LMG 4362 / NCIMB 8255 / S1).